The following is a 327-amino-acid chain: Peroxidase N (327 aa).

Positions 1-28 are cleaved as a signal peptide; it reads MKTQTKVMGGHVLLTVFTLCMLCSAVRA. Pyrrolidone carboxylic acid is present on Gln29. Cystine bridges form between Cys39–Cys116, Cys72–Cys77, Cys122–Cys323, and Cys200–Cys232. His70 serves as the catalytic Proton acceptor. The Ca(2+) site is built by Asp71, Val74, Gly76, Asp78, and Ser80. N-linked (GlcNAc...) asparagine glycosylation is present at Asn155. Pro163 lines the substrate pocket. Residue Asn182 is glycosylated (N-linked (GlcNAc...) asparagine). A heme b-binding site is contributed by His193. Thr194 is a Ca(2+) binding site. N-linked (GlcNAc...) asparagine glycans are attached at residues Asn209 and Asn239. Ca(2+) is bound at residue Asp245. Asn247 carries an N-linked (GlcNAc...) asparagine glycan. Residues Ser248 and Asp253 each contribute to the Ca(2+) site. Asn281 is a glycosylation site (N-linked (GlcNAc...) asparagine).

Belongs to the peroxidase family. Classical plant (class III) peroxidase subfamily. It depends on Ca(2+) as a cofactor. The cofactor is heme b.

It localises to the secreted. It carries out the reaction 2 a phenolic donor + H2O2 = 2 a phenolic radical donor + 2 H2O. Removal of H(2)O(2), oxidation of toxic reductants, biosynthesis and degradation of lignin, suberization, auxin catabolism, response to environmental stresses such as wounding, pathogen attack and oxidative stress. These functions might be dependent on each isozyme/isoform in each plant tissue. This chain is Peroxidase N (HRPN), found in Armoracia rusticana (Horseradish).